The primary structure comprises 104 residues: UPF0145 protein GTNG_1265 (104 aa).

This sequence belongs to the UPF0145 family.

The chain is UPF0145 protein GTNG_1265 from Geobacillus thermodenitrificans (strain NG80-2).